The primary structure comprises 252 residues: Probable 6-phosphogluconolactonase 5 (252 aa).

Belongs to the glucosamine/galactosamine-6-phosphate isomerase family. 6-phosphogluconolactonase subfamily.

Its subcellular location is the cytoplasm. It is found in the cytosol. The catalysed reaction is 6-phospho-D-glucono-1,5-lactone + H2O = 6-phospho-D-gluconate + H(+). Its pathway is carbohydrate degradation; pentose phosphate pathway; D-ribulose 5-phosphate from D-glucose 6-phosphate (oxidative stage): step 2/3. In terms of biological role, catalyzes the hydrolysis of 6-phosphogluconolactone to 6-phosphogluconate. This chain is Probable 6-phosphogluconolactonase 5, found in Arabidopsis thaliana (Mouse-ear cress).